The following is a 153-amino-acid chain: Interleukin-4 (153 aa).

An N-terminal signal peptide occupies residues 1-24; it reads MGLTSQLLPPLFFLLACAGNFVHG. 3 disulfides stabilise this stretch: cysteine 27/cysteine 151, cysteine 48/cysteine 89, and cysteine 70/cysteine 123. Asparagine 62 carries N-linked (GlcNAc...) asparagine glycosylation.

It belongs to the IL-4/IL-13 family.

Its subcellular location is the secreted. Its function is as follows. Participates in at least several B-cell activation processes as well as of other cell types. It is a costimulator of DNA-synthesis. It induces the expression of class II MHC molecules on resting B-cells. It enhances both secretion and cell surface expression of IgE and IgG1. It also regulates the expression of the low affinity Fc receptor for IgE (CD23) on both lymphocytes and monocytes. Positively regulates IL31RA expression in macrophages. Stimulates autophagy in dendritic cells by interfering with mTORC1 signaling and through the induction of RUFY4. The protein is Interleukin-4 (IL4) of Macaca fascicularis (Crab-eating macaque).